The sequence spans 321 residues: Lipoyl synthase (321 aa).

7 residues coordinate [4Fe-4S] cluster: C68, C73, C79, C94, C98, C101, and S308. The region spanning 80–297 (FNHGTATFMI…KALADELGFT (218 aa)) is the Radical SAM core domain.

Belongs to the radical SAM superfamily. Lipoyl synthase family. Requires [4Fe-4S] cluster as cofactor.

It is found in the cytoplasm. The enzyme catalyses [[Fe-S] cluster scaffold protein carrying a second [4Fe-4S](2+) cluster] + N(6)-octanoyl-L-lysyl-[protein] + 2 oxidized [2Fe-2S]-[ferredoxin] + 2 S-adenosyl-L-methionine + 4 H(+) = [[Fe-S] cluster scaffold protein] + N(6)-[(R)-dihydrolipoyl]-L-lysyl-[protein] + 4 Fe(3+) + 2 hydrogen sulfide + 2 5'-deoxyadenosine + 2 L-methionine + 2 reduced [2Fe-2S]-[ferredoxin]. It participates in protein modification; protein lipoylation via endogenous pathway; protein N(6)-(lipoyl)lysine from octanoyl-[acyl-carrier-protein]: step 2/2. Catalyzes the radical-mediated insertion of two sulfur atoms into the C-6 and C-8 positions of the octanoyl moiety bound to the lipoyl domains of lipoate-dependent enzymes, thereby converting the octanoylated domains into lipoylated derivatives. In Shewanella putrefaciens (strain CN-32 / ATCC BAA-453), this protein is Lipoyl synthase.